An 81-amino-acid chain; its full sequence is Putative membrane protein insertion efficiency factor (81 aa).

The tract at residues 61-81 (NDGGFDPVPPAPSSRTSSIAE) is disordered.

Belongs to the UPF0161 family.

Its subcellular location is the cell inner membrane. In terms of biological role, could be involved in insertion of integral membrane proteins into the membrane. The chain is Putative membrane protein insertion efficiency factor from Pseudomonas entomophila (strain L48).